We begin with the raw amino-acid sequence, 349 residues long: tRNA (guanine(26)-N(2))-dimethyltransferase (349 aa).

The Trm1 methyltransferase domain maps to 1–343 (MEVEEGRARV…ADRDVVVKIL (343 aa)). Residues Arg-25, Arg-50, Asp-66, Asp-92, and Ala-93 each coordinate S-adenosyl-L-methionine.

Belongs to the class I-like SAM-binding methyltransferase superfamily. Trm1 family.

The enzyme catalyses guanosine(26) in tRNA + 2 S-adenosyl-L-methionine = N(2)-dimethylguanosine(26) in tRNA + 2 S-adenosyl-L-homocysteine + 2 H(+). Its function is as follows. Dimethylates a single guanine residue at position 26 of a number of tRNAs using S-adenosyl-L-methionine as donor of the methyl groups. The sequence is that of tRNA (guanine(26)-N(2))-dimethyltransferase from Archaeoglobus fulgidus (strain ATCC 49558 / DSM 4304 / JCM 9628 / NBRC 100126 / VC-16).